The following is a 229-amino-acid chain: 2,3-bisphosphoglycerate-dependent phosphoglycerate mutase (229 aa).

Substrate contacts are provided by residues 7–14 (RHGQSEWN), 20–21 (TG), arginine 59, 86–89 (ERHY), lysine 97, 113–114 (RR), and 182–183 (GN). The active-site Tele-phosphohistidine intermediate is histidine 8. Catalysis depends on glutamate 86, which acts as the Proton donor/acceptor.

This sequence belongs to the phosphoglycerate mutase family. BPG-dependent PGAM subfamily.

It carries out the reaction (2R)-2-phosphoglycerate = (2R)-3-phosphoglycerate. Its pathway is carbohydrate degradation; glycolysis; pyruvate from D-glyceraldehyde 3-phosphate: step 3/5. In terms of biological role, catalyzes the interconversion of 2-phosphoglycerate and 3-phosphoglycerate. This Listeria monocytogenes serotype 4b (strain F2365) protein is 2,3-bisphosphoglycerate-dependent phosphoglycerate mutase.